The primary structure comprises 360 residues: DNA polymerase IV (360 aa).

The UmuC domain maps to 8-189; the sequence is IIHVDMDCFF…LPLEKIPGVG (182 aa). D12 and D107 together coordinate Mg(2+). E108 is an active-site residue.

This sequence belongs to the DNA polymerase type-Y family. Monomer. Requires Mg(2+) as cofactor.

It is found in the cytoplasm. The catalysed reaction is DNA(n) + a 2'-deoxyribonucleoside 5'-triphosphate = DNA(n+1) + diphosphate. Its function is as follows. Poorly processive, error-prone DNA polymerase involved in untargeted mutagenesis. Copies undamaged DNA at stalled replication forks, which arise in vivo from mismatched or misaligned primer ends. These misaligned primers can be extended by PolIV. Exhibits no 3'-5' exonuclease (proofreading) activity. May be involved in translesional synthesis, in conjunction with the beta clamp from PolIII. The polypeptide is DNA polymerase IV (Vibrio cholerae serotype O1 (strain ATCC 39541 / Classical Ogawa 395 / O395)).